Consider the following 424-residue polypeptide: Gamma-glutamyl phosphate reductase (424 aa).

This sequence belongs to the gamma-glutamyl phosphate reductase family.

It is found in the cytoplasm. The catalysed reaction is L-glutamate 5-semialdehyde + phosphate + NADP(+) = L-glutamyl 5-phosphate + NADPH + H(+). Its pathway is amino-acid biosynthesis; L-proline biosynthesis; L-glutamate 5-semialdehyde from L-glutamate: step 2/2. In terms of biological role, catalyzes the NADPH-dependent reduction of L-glutamate 5-phosphate into L-glutamate 5-semialdehyde and phosphate. The product spontaneously undergoes cyclization to form 1-pyrroline-5-carboxylate. This chain is Gamma-glutamyl phosphate reductase, found in Shewanella woodyi (strain ATCC 51908 / MS32).